The chain runs to 671 residues: Phenol 2-monooxygenase (671 aa).

Residues 10 to 43 (DVLI…RIFD) and 295 to 305 (LQEGRVFLAGD) each bind FAD.

It belongs to the PheA/TfdB FAD monooxygenase family. It depends on FAD as a cofactor.

The protein resides in the cytoplasm. It carries out the reaction phenol + NADPH + O2 + H(+) = catechol + NADP(+) + H2O. It participates in aromatic compound metabolism; phenol degradation. Hydroxylates phenol to catechol. Also acts on cresols. The sequence is that of Phenol 2-monooxygenase (tbuD) from Ralstonia pickettii (Burkholderia pickettii).